Here is a 264-residue protein sequence, read N- to C-terminus: S-adenosylmethionine decarboxylase proenzyme (264 aa).

Residue Ser112 is the Schiff-base intermediate with substrate; via pyruvic acid of the active site. Ser112 bears the Pyruvic acid (Ser); by autocatalysis mark. His117 (proton acceptor; for processing activity) is an active-site residue. Cys140 (proton donor; for catalytic activity) is an active-site residue.

Belongs to the prokaryotic AdoMetDC family. Type 2 subfamily. Heterooctamer of four alpha and four beta chains arranged as a tetramer of alpha/beta heterodimers. Pyruvate is required as a cofactor. In terms of processing, is synthesized initially as an inactive proenzyme. Formation of the active enzyme involves a self-maturation process in which the active site pyruvoyl group is generated from an internal serine residue via an autocatalytic post-translational modification. Two non-identical subunits are generated from the proenzyme in this reaction, and the pyruvate is formed at the N-terminus of the alpha chain, which is derived from the carboxyl end of the proenzyme. The post-translation cleavage follows an unusual pathway, termed non-hydrolytic serinolysis, in which the side chain hydroxyl group of the serine supplies its oxygen atom to form the C-terminus of the beta chain, while the remainder of the serine residue undergoes an oxidative deamination to produce ammonia and the pyruvoyl group blocking the N-terminus of the alpha chain.

The enzyme catalyses S-adenosyl-L-methionine + H(+) = S-adenosyl 3-(methylsulfanyl)propylamine + CO2. The protein operates within amine and polyamine biosynthesis; S-adenosylmethioninamine biosynthesis; S-adenosylmethioninamine from S-adenosyl-L-methionine: step 1/1. In terms of biological role, catalyzes the decarboxylation of S-adenosylmethionine to S-adenosylmethioninamine (dcAdoMet), the propylamine donor required for the synthesis of the polyamines spermine and spermidine from the diamine putrescine. The chain is S-adenosylmethionine decarboxylase proenzyme from Salmonella arizonae (strain ATCC BAA-731 / CDC346-86 / RSK2980).